A 270-amino-acid polypeptide reads, in one-letter code: 3-phenylpropionate-dihydrodiol/cinnamic acid-dihydrodiol dehydrogenase (270 aa).

10–34 is a binding site for NAD(+); the sequence is FITGGGSGLGLALVERFIEEGAQVA. Ser143 serves as a coordination point for substrate. Catalysis depends on Tyr156, which acts as the Proton acceptor.

This sequence belongs to the short-chain dehydrogenases/reductases (SDR) family.

It carries out the reaction 3-(cis-5,6-dihydroxycyclohexa-1,3-dien-1-yl)propanoate + NAD(+) = 3-(2,3-dihydroxyphenyl)propanoate + NADH + H(+). The enzyme catalyses (2E)-3-(cis-5,6-dihydroxycyclohexa-1,3-dien-1-yl)prop-2-enoate + NAD(+) = (2E)-3-(2,3-dihydroxyphenyl)prop-2-enoate + NADH + H(+). Its pathway is aromatic compound metabolism; 3-phenylpropanoate degradation. Functionally, converts 3-phenylpropionate-dihydrodiol (PP-dihydrodiol) and cinnamic acid-dihydrodiol (CI-dihydrodiol) into 3-(2,3-dihydroxylphenyl)propanoic acid (DHPP) and 2,3-dihydroxicinnamic acid (DHCI), respectively. The polypeptide is 3-phenylpropionate-dihydrodiol/cinnamic acid-dihydrodiol dehydrogenase (Escherichia coli (strain K12 / MC4100 / BW2952)).